We begin with the raw amino-acid sequence, 339 residues long: RxLR effector protein SFI4 (339 aa).

A signal peptide spans 1–24 (MRVLRVTFLWALLLLVAFSASVYA). Residues 51 to 74 (RGLRNSGMKLNDAKDFKGAIAKLR) carry the RxLR-dEER motif. 4 TPR repeats span residues 106–139 (AQILNDYGTVLIRAKQYDEAIEVLEDSVAMVEKI), 190–223 (IEASLRIAEGYKKLGNTKKNLKVLKDAVEAQNGE), 232–265 (AELYMELSTAHVAVGEIDDALRAAEVASAIFRQR), and 274–307 (AFSLNALAGVKMRQKKVDEAIKLLEQAHRIAVQI).

The protein belongs to the RxLR effector family.

It is found in the secreted. Its subcellular location is the host nucleus. The protein localises to the host cytoplasm. Functionally, effector that suppresses flg22-induced post-translational MAP kinase activation in tomato but not in Arabidopsis. The perception of highly conserved pathogen- or microbe-associated molecular patterns (PAMPs/MAMPs), such as flg22, triggers converging signaling pathways recruiting MAP kinase cascades and inducing transcriptional re-programming, yielding a generic antimicrobial response. This is RxLR effector protein SFI4 from Phytophthora infestans (strain T30-4) (Potato late blight agent).